Consider the following 1405-residue polypeptide: DNA-directed RNA polymerase subunit beta' (1405 aa).

Positions 70, 72, 85, and 88 each coordinate Zn(2+). The Mg(2+) site is built by aspartate 460, aspartate 462, and aspartate 464. Residues cysteine 814, cysteine 888, cysteine 895, and cysteine 898 each coordinate Zn(2+).

It belongs to the RNA polymerase beta' chain family. The RNAP catalytic core consists of 2 alpha, 1 beta, 1 beta' and 1 omega subunit. When a sigma factor is associated with the core the holoenzyme is formed, which can initiate transcription. The cofactor is Mg(2+). Zn(2+) serves as cofactor.

It carries out the reaction RNA(n) + a ribonucleoside 5'-triphosphate = RNA(n+1) + diphosphate. Functionally, DNA-dependent RNA polymerase catalyzes the transcription of DNA into RNA using the four ribonucleoside triphosphates as substrates. This Shewanella oneidensis (strain ATCC 700550 / JCM 31522 / CIP 106686 / LMG 19005 / NCIMB 14063 / MR-1) protein is DNA-directed RNA polymerase subunit beta'.